The primary structure comprises 478 residues: Septin-4 (478 aa).

The disordered stretch occupies residues 1 to 115; sequence MDHSLGWQGN…RSPWGKLDPY (115 aa). Phosphoserine occurs at positions 28, 29, and 68. Polar residues predominate over residues 84–93; the sequence is PQPSDSQQYF. Low complexity predominate over residues 94–108; sequence SAPAPLSPSSRPRSP. A phosphoserine mark is found at serine 117 and serine 118. Positions 141 to 414 constitute a Septin-type G domain; the sequence is KGFDFTLMVA…ENYRAQCIQS (274 aa). The G1 motif stretch occupies residues 151 to 158; it reads GESGLGKS. GTP is bound by residues 151–158 and threonine 185; that span reads GESGLGKS. The tract at residues 208–211 is G3 motif; that stretch reads DTPG. The G4 motif stretch occupies residues 289–292; the sequence is AKAD. Residue 290 to 298 coordinates GTP; sequence KADTLTPPE. The residue at position 325 (serine 325) is a Phosphoserine. Positions 348 and 363 each coordinate GTP. The disordered stretch occupies residues 428–449; sequence LTRESGTDFPIPAVPPGTDPET. Position 432 is a phosphoserine (serine 432). Position 434 is a phosphothreonine (threonine 434). Residues 447-478 are a coiled coil; sequence PETEKLIREKDEELRRMQEMLHKIQRQMKETH.

The protein belongs to the TRAFAC class TrmE-Era-EngA-EngB-Septin-like GTPase superfamily. Septin GTPase family. Septins polymerize into heterooligomeric protein complexes that form filaments, and can associate with cellular membranes, actin filaments and microtubules. GTPase activity is required for filament formation. Interacts with SEPTIN8. Component of a septin core octameric complex consisting of SEPTIN12, SEPTIN7, SEPTIN6 and SEPTIN2 or SEPTIN4 in the order 12-7-6-2-2-6-7-12 or 12-7-6-4-4-6-7-12. Interacts with SEPTIN14 (via C-terminus). Interacts with DYRK1A. Interacts with SLC6A3/DAT and SNCA/alpha-synuclein. Interacts with STX1A; in the striatum. Interacts with XIAP (via BIR3 domain) following the induction of apoptosis. Interacts with AREL1 (via HECT domain); in the cytoplasm following induction of apoptosis. In terms of assembly, interacts with DPYSL5. In terms of processing, phosphorylated by DYRK1A. Ubiquitinated by AREL1. Post-translationally, may be phosphorylated. Expressed in the cerebral cortex, striatum, midbrain, cerebellum and spinal cord (at protein level). Expressed in the substantia nigra pars compacta, ventral tegmental area, projection fiber bundles and in axon terminals surrounding striatal neurons (at protein level). Expressed in hair follicle stem cells (at protein level). Expressed in small intestinal crypts; abundantly expressed at the crypt base (at protein level). Widely expressed in the brain and to a lesser extent in the testis, lung and liver. In terms of tissue distribution, highly expressed in the brain and testis and, to a lesser extent in the heart, lung and kidney. In the brain, abundant in areas of high cell density, particularly in the stria terminalis. Expressed in the entorhinal, temporal and visual cortices and the hippocampus of the brain where is colocalizes with DYRK1A in postnatal day 1 and adult mice. Expressed and extensively colocalizes with DYRK1A in apical dendrites of pyramidal cells. As to expression, predominantly expressed in embryonic brain and dorsal root ganglion neurons. Expressed in LGR5-positive intestinal stem cells and lysozyme-positive Paneth cells (at protein level). Expressed in the brain and testis.

The protein resides in the cytoplasm. It localises to the cell projection. It is found in the cilium. Its subcellular location is the flagellum. The protein localises to the cytoplasmic vesicle. The protein resides in the secretory vesicle. It localises to the axon. It is found in the dendrite. Its subcellular location is the perikaryon. The protein localises to the synapse. The protein resides in the mitochondrion. It localises to the cytosol. Functionally, filament-forming cytoskeletal GTPase. Pro-apoptotic protein involved in LGR5-positive intestinal stem cell and Paneth cell expansion in the intestines, via its interaction with XIAP. May also play a role in the regulation of cell fate in the intestine. Positive regulator of apoptosis involved in hematopoietic stem cell homeostasis; via its interaction with XIAP. Negative regulator of repair and hair follicle regeneration in response to injury, due to inhibition of hair follicle stem cell proliferation, potentially via its interaction with XIAP. Plays an important role in male fertility and sperm motility. During spermiogenesis, essential for the establishment of the annulus (a fibrous ring structure connecting the midpiece and the principal piece of the sperm flagellum) which is a requisite for the structural and mechanical integrity of the sperm. Involved in the migration of cortical neurons and the formation of neuron leading processes during embryonic development. Required for dopaminergic metabolism in presynaptic autoreceptors; potentially via activity as a presynaptic scaffold protein. The sequence is that of Septin-4 from Mus musculus (Mouse).